Consider the following 144-residue polypeptide: Transcription antitermination protein NusB (144 aa).

The protein belongs to the NusB family.

Involved in transcription antitermination. Required for transcription of ribosomal RNA (rRNA) genes. Binds specifically to the boxA antiterminator sequence of the ribosomal RNA (rrn) operons. This Leifsonia xyli subsp. xyli (strain CTCB07) protein is Transcription antitermination protein NusB.